Reading from the N-terminus, the 191-residue chain is Putative manganese efflux pump MntP (191 aa).

Helical transmembrane passes span 3-23 (PISI…AAIG), 37-57 (LRAG…GWLL), 65-85 (VEAF…IHMI), 107-129 (WKLA…GLAF), 144-164 (CTLT…SMVG), and 169-189 (IIGG…HLHG).

It belongs to the MntP (TC 9.B.29) family.

It localises to the cell inner membrane. Its function is as follows. Probably functions as a manganese efflux pump. The polypeptide is Putative manganese efflux pump MntP (Stenotrophomonas maltophilia (strain R551-3)).